The following is a 150-amino-acid chain: MTIKLESLQSNKGSRRKKMRKGRGIAAGQGASCGFGMRGQKSRSGRPTRPGFEGGQMPLYRRVPKLKHFPIVNQKNFTVLNVSRLNALKDGTIVNLDLLVKEGILTKPKNPLKILGNGNLEVKLTVQAAAFTASAKKKIEEVGGSCELYN.

The disordered stretch occupies residues M1–M57. Over residues G13–R23 the composition is skewed to basic residues. Residues I25–M37 show a composition bias toward gly residues.

It belongs to the universal ribosomal protein uL15 family. As to quaternary structure, part of the 50S ribosomal subunit.

Binds to the 23S rRNA. The polypeptide is Large ribosomal subunit protein uL15 (Prochlorococcus marinus (strain NATL1A)).